An 80-amino-acid chain; its full sequence is U19-lycotoxin-Ls1a (80 aa).

A signal peptide spans 1 to 22 (MSPKVQALIFIVGLITLLAAHA). The propeptide occupies 23–34 (QEELSDNTESER). 4 disulfides stabilise this stretch: Cys36–Cys50, Cys43–Cys55, Cys49–Cys66, and Cys57–Cys64.

It belongs to the neurotoxin 02 (plectoxin) family. 05 (U19-lycotoxin) subfamily. As to expression, expressed by the venom gland.

It localises to the secreted. This is U19-lycotoxin-Ls1a from Lycosa singoriensis (Wolf spider).